The chain runs to 506 residues: Tyrosine-protein kinase FRK (506 aa).

The SH3 domain occupies 43–111 (SQGQYFVALF…PSNYVAEDRS (69 aa)). Positions 117–209 (WFFGAIKRAD…GLCVKLEKPC (93 aa)) constitute an SH2 domain. Residue Thr179 is modified to Phosphothreonine. Residues 235–492 (IQLLKRLGSG…TLHWKLEDYF (258 aa)) form the Protein kinase domain. ATP-binding positions include 241–249 (LGSGQFGEV) and Lys263. Residue Asp355 is the Proton acceptor of the active site. Residue Tyr388 is modified to Phosphotyrosine; by autocatalysis.

It belongs to the protein kinase superfamily. Tyr protein kinase family. SRC subfamily. In terms of assembly, interacts (via the SH3-domain) with PTEN. Interacts with RB1. In terms of tissue distribution, highly expressed in stomach, small intestine and colon. Concentrated in the brush border membranes of epithelial cells, throughout the maturation axis of the adult small intestine.

It is found in the cytoplasm. It localises to the nucleus. The enzyme catalyses L-tyrosyl-[protein] + ATP = O-phospho-L-tyrosyl-[protein] + ADP + H(+). Functionally, non-receptor tyrosine-protein kinase that negatively regulates cell proliferation. Positively regulates PTEN protein stability through phosphorylation of PTEN on 'Tyr-336', which in turn prevents its ubiquitination and degradation, possibly by reducing its binding to NEDD4. May function as a tumor suppressor. The protein is Tyrosine-protein kinase FRK (Frk) of Rattus norvegicus (Rat).